A 209-amino-acid chain; its full sequence is 2-phospho-L-lactate guanylyltransferase (209 aa).

The protein belongs to the CofC family. Homodimer.

It carries out the reaction (2S)-2-phospholactate + GTP + H(+) = (2S)-lactyl-2-diphospho-5'-guanosine + diphosphate. The protein operates within cofactor biosynthesis; coenzyme F420 biosynthesis. Functionally, guanylyltransferase that catalyzes the activation of (2S)-2-phospholactate (2-PL) as (2S)-lactyl-2-diphospho-5'-guanosine, via the condensation of 2-PL with GTP. It is involved in the biosynthesis of coenzyme F420, a hydride carrier cofactor. This is 2-phospho-L-lactate guanylyltransferase from Methanosphaerula palustris (strain ATCC BAA-1556 / DSM 19958 / E1-9c).